A 901-amino-acid chain; its full sequence is Protein translocase subunit SecA (901 aa).

ATP is bound by residues Gln-87, 105-109, and Asp-512; that span reads GEGKT. Residues Cys-885, Cys-887, Cys-896, and His-897 each contribute to the Zn(2+) site.

It belongs to the SecA family. As to quaternary structure, monomer and homodimer. Part of the essential Sec protein translocation apparatus which comprises SecA, SecYEG and auxiliary proteins SecDF-YajC and YidC. The cofactor is Zn(2+).

It localises to the cell inner membrane. The protein localises to the cytoplasm. The catalysed reaction is ATP + H2O + cellular proteinSide 1 = ADP + phosphate + cellular proteinSide 2.. Its function is as follows. Part of the Sec protein translocase complex. Interacts with the SecYEG preprotein conducting channel. Has a central role in coupling the hydrolysis of ATP to the transfer of proteins into and across the cell membrane, serving both as a receptor for the preprotein-SecB complex and as an ATP-driven molecular motor driving the stepwise translocation of polypeptide chains across the membrane. This is Protein translocase subunit SecA from Salmonella agona (strain SL483).